A 380-amino-acid polypeptide reads, in one-letter code: Transaldolase (380 aa).

The active-site Schiff-base intermediate with substrate is the lysine 141.

Belongs to the transaldolase family. Type 2 subfamily.

Its subcellular location is the cytoplasm. The catalysed reaction is D-sedoheptulose 7-phosphate + D-glyceraldehyde 3-phosphate = D-erythrose 4-phosphate + beta-D-fructose 6-phosphate. It functions in the pathway carbohydrate degradation; pentose phosphate pathway; D-glyceraldehyde 3-phosphate and beta-D-fructose 6-phosphate from D-ribose 5-phosphate and D-xylulose 5-phosphate (non-oxidative stage): step 2/3. In terms of biological role, transaldolase is important for the balance of metabolites in the pentose-phosphate pathway. This is Transaldolase from Trichodesmium erythraeum (strain IMS101).